We begin with the raw amino-acid sequence, 247 residues long: Probable transcriptional regulatory protein YPK_2146 (247 aa).

This sequence belongs to the TACO1 family.

It is found in the cytoplasm. The sequence is that of Probable transcriptional regulatory protein YPK_2146 from Yersinia pseudotuberculosis serotype O:3 (strain YPIII).